Here is a 250-residue protein sequence, read N- to C-terminus: Probable transcriptional regulatory protein Cpha266_0538 (250 aa).

The protein belongs to the TACO1 family.

The protein localises to the cytoplasm. The polypeptide is Probable transcriptional regulatory protein Cpha266_0538 (Chlorobium phaeobacteroides (strain DSM 266 / SMG 266 / 2430)).